The sequence spans 1114 residues: Lysylphosphatidylglycerol biosynthesis bifunctional protein LysX (1114 aa).

Residues 1–11 show a composition bias toward basic and acidic residues; it reads MSASTETHHAS. The segment at 1-26 is disordered; it reads MSASTETHHASEAAVPTAPRPRPGLG. The segment at 1–618 is phosphatidylglycerol lysyltransferase; it reads MSASTETHHA…GLHSDGSAPG (618 aa). Transmembrane regions (helical) follow at residues 38-58, 77-97, 101-121, 126-146, 164-184, and 219-239; these read IAGL…ISPV, APDT…ALAS, IAWW…VIVS, NVNA…LIAA, GVLI…VELF, and FVNT…VITL. The segment at 619–1114 is lysine--tRNA ligase; it reads EGLAPTATGP…LAFPLAKPRQ (496 aa). A DNA-binding region (OB) is located at residues 674–751; sequence VRIAGRLLRI…LSLLANEWRM (78 aa). Mg(2+) contacts are provided by Asp1025 and Glu1032.

It in the N-terminal section; belongs to the LPG synthetase family. In the C-terminal section; belongs to the class-II aminoacyl-tRNA synthetase family. Requires Mg(2+) as cofactor.

Its subcellular location is the cell membrane. The enzyme catalyses tRNA(Lys) + L-lysine + ATP = L-lysyl-tRNA(Lys) + AMP + diphosphate. It carries out the reaction L-lysyl-tRNA(Lys) + a 1,2-diacyl-sn-glycero-3-phospho-(1'-sn-glycerol) = a 1,2-diacyl-sn-glycero-3-phospho-1'-(3'-O-L-lysyl)-sn-glycerol + tRNA(Lys). Functionally, catalyzes the production of L-lysyl-tRNA(Lys)transfer and the transfer of a lysyl group from L-lysyl-tRNA(Lys) to membrane-bound phosphatidylglycerol (PG), which produces lysylphosphatidylglycerol (LPG), one of the components of the bacterial membrane with a positive net charge. LPG synthesis contributes to the resistance to cationic antimicrobial peptides (CAMPs) and likely protects M.tuberculosis against the CAMPs produced by competiting microorganisms (bacteriocins). In fact, the modification of anionic phosphatidylglycerol with positively charged L-lysine results in repulsion of the peptides. In Rhodococcus jostii (strain RHA1), this protein is Lysylphosphatidylglycerol biosynthesis bifunctional protein LysX (lysX).